A 319-amino-acid chain; its full sequence is Ornithine carbamoyltransferase (319 aa).

Residues 63–66 (STRT), glutamine 90, arginine 114, and 141–144 (HPCQ) contribute to the carbamoyl phosphate site. L-ornithine is bound by residues asparagine 172, aspartate 236, and 240–241 (SM). Carbamoyl phosphate contacts are provided by residues 276 to 277 (CL) and arginine 304.

It belongs to the aspartate/ornithine carbamoyltransferase superfamily. OTCase family.

It is found in the cytoplasm. The catalysed reaction is carbamoyl phosphate + L-ornithine = L-citrulline + phosphate + H(+). It participates in amino-acid biosynthesis; L-arginine biosynthesis; L-arginine from L-ornithine and carbamoyl phosphate: step 1/3. Functionally, reversibly catalyzes the transfer of the carbamoyl group from carbamoyl phosphate (CP) to the N(epsilon) atom of ornithine (ORN) to produce L-citrulline. This chain is Ornithine carbamoyltransferase, found in Halalkalibacterium halodurans (strain ATCC BAA-125 / DSM 18197 / FERM 7344 / JCM 9153 / C-125) (Bacillus halodurans).